A 524-amino-acid polypeptide reads, in one-letter code: Mitochondrial-processing peptidase subunit alpha (524 aa).

A mitochondrion-targeting transit peptide spans 1–32 (MATAVWAAARLLRGSAALCARPKFGSPAHRRF). The residue at position 63 (lysine 63) is an N6-succinyllysine.

This sequence belongs to the peptidase M16 family. As to quaternary structure, heterodimer of PMPCA (alpha) and PMPCB (beta) subunits, forming the mitochondrial processing protease (MPP) in which PMPCA is involved in substrate recognition and binding and PMPCB is the catalytic subunit.

It localises to the mitochondrion matrix. It is found in the mitochondrion inner membrane. Functionally, substrate recognition and binding subunit of the essential mitochondrial processing protease (MPP), which cleaves the mitochondrial sequence off newly imported precursors proteins. The sequence is that of Mitochondrial-processing peptidase subunit alpha (Pmpca) from Rattus norvegicus (Rat).